The sequence spans 148 residues: CASP-like protein 1 (148 aa).

Transmembrane regions (helical) follow at residues Phe31–Leu51, Val74–Gly94, and Ile121–Thr141.

It belongs to the Casparian strip membrane proteins (CASP) family. Homodimer and heterodimers.

The protein resides in the cell membrane. The sequence is that of CASP-like protein 1 from Panax ginseng (Korean ginseng).